The chain runs to 511 residues: 2,3-bisphosphoglycerate-independent phosphoglycerate mutase (511 aa).

Mn(2+) is bound by residues D14 and S64. S64 (phosphoserine intermediate) is an active-site residue. Substrate-binding positions include H125, 155–156 (RD), R187, R193, 259–262 (RADR), and K333. Residues D400, H404, D441, H442, and H460 each coordinate Mn(2+).

The protein belongs to the BPG-independent phosphoglycerate mutase family. In terms of assembly, monomer. Mn(2+) is required as a cofactor.

The catalysed reaction is (2R)-2-phosphoglycerate = (2R)-3-phosphoglycerate. It functions in the pathway carbohydrate degradation; glycolysis; pyruvate from D-glyceraldehyde 3-phosphate: step 3/5. Functionally, catalyzes the interconversion of 2-phosphoglycerate and 3-phosphoglycerate. The protein is 2,3-bisphosphoglycerate-independent phosphoglycerate mutase of Pseudomonas putida (strain ATCC 47054 / DSM 6125 / CFBP 8728 / NCIMB 11950 / KT2440).